Reading from the N-terminus, the 465-residue chain is Amino-acid carrier protein AlsT (465 aa).

The next 10 membrane-spanning stretches (helical) occupy residues 20–40 (LFYI…FIQF), 82–102 (VALA…VVAA), 142–162 (WLGI…FNAV), 177–197 (VNKI…IFGG), 208–228 (IVPV…ITNI), 241–261 (NALG…VIGA), 296–316 (LGVF…ILLY), 336–356 (IGGW…FSSV), 382–402 (IAVI…VWDM), and 405–425 (LFMG…SNVA).

Belongs to the alanine or glycine:cation symporter (AGCS) (TC 2.A.25) family.

The protein resides in the cell membrane. The chain is Amino-acid carrier protein AlsT (alsT) from Bacillus subtilis (strain 168).